The sequence spans 507 residues: Maturase K (507 aa).

It belongs to the intron maturase 2 family. MatK subfamily.

It localises to the plastid. The protein localises to the chloroplast. Its function is as follows. Usually encoded in the trnK tRNA gene intron. Probably assists in splicing its own and other chloroplast group II introns. The protein is Maturase K of Araucaria heterophylla (Norfolk Island pine).